We begin with the raw amino-acid sequence, 263 residues long: Protein TILLER ANGLE CONTROL 1 (263 aa).

The short motif at 55–61 is the IGT motif element; it reads GILAIGT. Residues 243-263 form a disordered region; it reads GKKIHPEQLNGRSNAEGPLTA.

The protein belongs to the TAC family. In terms of tissue distribution, highly expressed in leaf sheath pulvinus. Expressed in shoot apical meristem and leaves.

In terms of biological role, involved in the regulation of leaf growth angle. Promotes horizontal shoot growth. This chain is Protein TILLER ANGLE CONTROL 1, found in Zea mays (Maize).